Reading from the N-terminus, the 381-residue chain is CCN family member 1 (381 aa).

Residues 1-24 form the signal peptide; sequence MSSRIARALALVVTLLHLTRLALS. Residues 25-94 enclose the IGFBP N-terminal domain; the sequence is TCPAACHCPL…TALKGICRAQ (70 aa). Intrachain disulfides connect cysteine 26/cysteine 50, cysteine 30/cysteine 52, cysteine 32/cysteine 53, cysteine 39/cysteine 56, cysteine 64/cysteine 78, and cysteine 70/cysteine 91. One can recognise a VWFC domain in the interval 98 to 164; sequence RPCEYNSRIY…GQCCEEWVCD (67 aa). Position 188 is a phosphoserine (serine 188). Residues 228 to 273 form the TSP type-1 domain; the sequence is KCIVQTTSWSQCSKTCGTGISTRVTNDNPECRLVKETRICEVRPCG. The segment at 279–315 is heparin-binding; the sequence is SLKKGKKCSKTKKSPEPVRFTYAGCLSVKKYRPKYCG. 5 disulfide bridges follow: cysteine 286–cysteine 323, cysteine 303–cysteine 337, cysteine 314–cysteine 353, cysteine 317–cysteine 355, and cysteine 322–cysteine 359. The CTCK domain occupies 286 to 360; the sequence is CSKTKKSPEP…QSCKCNYNCP (75 aa).

It belongs to the CCN family. Interaction with integrins is heparin- and cell-type-dependent and promotes cell adhesion.

The protein resides in the secreted. In terms of biological role, promotes cell proliferation, chemotaxis, angiogenesis and cell adhesion. Appears to play a role in wound healing by up-regulating, in skin fibroblasts, the expression of a number of genes involved in angiogenesis, inflammation and matrix remodeling including VEGA-A, VEGA-C, MMP1, MMP3, TIMP1, uPA, PAI-1 and integrins alpha-3 and alpha-5. CCN1-mediated gene regulation is dependent on heparin-binding. Down-regulates the expression of alpha-1 and alpha-2 subunits of collagen type-1. Promotes cell adhesion and adhesive signaling through integrin alpha-6/beta-1, cell migration through integrin alpha-1/beta-5 and cell proliferation through integrin alpha-v/beta-3. This is CCN family member 1 (CCN1) from Pan troglodytes (Chimpanzee).